A 285-amino-acid chain; its full sequence is MTAQNIDGKLISQTVRSEVAARVKARTQAGLRAPGLAVVLVGEDPASQVYVGSKRKACEEVGFVSKSYDLPATATEDELLTLVDQLNEDPEIDGILVQLPLPAGIDSTQVLERITPEKDVDGFHPYNVGRLAQRMPKLRSCTPKGIITLLDRYNIDLRGKHAVVVGASNIVGRPMTLELLLAGCTTTTCHRFTKDLEGHVRQADVVVVAVGKPNFIPGAWIKKGAVVVDVGINRLESGKLVGDVEYDVAKESASFITPVPGGVGPMTVASLIENTMIACEQFHSK.

NADP(+)-binding positions include 166-168 and isoleucine 232; that span reads GAS.

This sequence belongs to the tetrahydrofolate dehydrogenase/cyclohydrolase family. As to quaternary structure, homodimer.

The catalysed reaction is (6R)-5,10-methylene-5,6,7,8-tetrahydrofolate + NADP(+) = (6R)-5,10-methenyltetrahydrofolate + NADPH. The enzyme catalyses (6R)-5,10-methenyltetrahydrofolate + H2O = (6R)-10-formyltetrahydrofolate + H(+). Its pathway is one-carbon metabolism; tetrahydrofolate interconversion. In terms of biological role, catalyzes the oxidation of 5,10-methylenetetrahydrofolate to 5,10-methenyltetrahydrofolate and then the hydrolysis of 5,10-methenyltetrahydrofolate to 10-formyltetrahydrofolate. In Vibrio atlanticus (strain LGP32) (Vibrio splendidus (strain Mel32)), this protein is Bifunctional protein FolD.